A 630-amino-acid polypeptide reads, in one-letter code: Biosynthetic arginine decarboxylase (630 aa).

N6-(pyridoxal phosphate)lysine is present on K99. 281–291 (VDIGGGLGVDY) is a binding site for substrate.

The protein belongs to the Orn/Lys/Arg decarboxylase class-II family. SpeA subfamily. The cofactor is Mg(2+). Requires pyridoxal 5'-phosphate as cofactor.

The catalysed reaction is L-arginine + H(+) = agmatine + CO2. It functions in the pathway amine and polyamine biosynthesis; agmatine biosynthesis; agmatine from L-arginine: step 1/1. Functionally, catalyzes the biosynthesis of agmatine from arginine. In Phocaeicola vulgatus (strain ATCC 8482 / DSM 1447 / JCM 5826 / CCUG 4940 / NBRC 14291 / NCTC 11154) (Bacteroides vulgatus), this protein is Biosynthetic arginine decarboxylase.